The primary structure comprises 282 residues: 3-oxoadipate CoA-transferase subunit A (282 aa).

Belongs to the 3-oxoacid CoA-transferase subunit A family. As to quaternary structure, heterotetramer composed of 2 A and 2 B subunits.

The catalysed reaction is 3-oxoadipate + succinyl-CoA = 3-oxoadipyl-CoA + succinate. Its pathway is aromatic compound metabolism; beta-ketoadipate pathway; acetyl-CoA and succinyl-CoA from 3-oxoadipate: step 1/2. In terms of biological role, catalyzes the CoA transfer from succinate to 3-oxoadipate (beta-ketoadipate). The sequence is that of 3-oxoadipate CoA-transferase subunit A (catI) from Pseudomonas knackmussii (strain DSM 6978 / CCUG 54928 / LMG 23759 / B13).